The primary structure comprises 87 residues: Small ribosomal subunit protein bS20 (87 aa).

A disordered region spans residues Met1–Ser26.

Belongs to the bacterial ribosomal protein bS20 family.

In terms of biological role, binds directly to 16S ribosomal RNA. This Escherichia coli O17:K52:H18 (strain UMN026 / ExPEC) protein is Small ribosomal subunit protein bS20.